The primary structure comprises 314 residues: Methionyl-tRNA formyltransferase (314 aa).

109-112 (SLLP) provides a ligand contact to (6S)-5,6,7,8-tetrahydrofolate.

The protein belongs to the Fmt family.

The enzyme catalyses L-methionyl-tRNA(fMet) + (6R)-10-formyltetrahydrofolate = N-formyl-L-methionyl-tRNA(fMet) + (6S)-5,6,7,8-tetrahydrofolate + H(+). Functionally, attaches a formyl group to the free amino group of methionyl-tRNA(fMet). The formyl group appears to play a dual role in the initiator identity of N-formylmethionyl-tRNA by promoting its recognition by IF2 and preventing the misappropriation of this tRNA by the elongation apparatus. The chain is Methionyl-tRNA formyltransferase from Syntrophomonas wolfei subsp. wolfei (strain DSM 2245B / Goettingen).